The chain runs to 510 residues: Protein ERGIC-53 (510 aa).

An N-terminal signal peptide occupies residues Met1–Gly30. Over Asp31–Ser477 the chain is Lumenal. In terms of domain architecture, L-type lectin-like spans Arg44–Leu267. Positions 88 and 121 each coordinate a carbohydrate. Residues Asp152, Phe154, and Asn156 each contribute to the Ca(2+) site. Asn156 and His178 together coordinate a carbohydrate. A Ca(2+)-binding site is contributed by Asp181. Cys190 and Cys230 are joined by a disulfide. An a carbohydrate-binding site is contributed by Gly251–Leu253. Position 425 is a phosphoserine (Ser425). The helical transmembrane segment at Thr478–Tyr498 threads the bilayer. The Cytoplasmic portion of the chain corresponds to Arg499–Phe510. The mediates interaction with RAB3GAP1, RAB3GAP2 and UBXN6 stretch occupies residues Arg499–Phe510. Residues Phe509–Phe510 carry the ER export motif motif.

As to quaternary structure, exists both as a covalent disulfide-linked homohexamer, and a complex of three disulfide-linked dimers non-covalently kept together. Interacts with MCFD2. May interact with TMEM115. Interacts with RAB3GAP1 and RAB3GAP2. Interacts with UBXN6. Interacts with SERPINA1/alpha1-antitrypsin. Interacts with BET1. In terms of processing, the N-terminal may be partly blocked. Ubiquitous.

Its subcellular location is the endoplasmic reticulum-Golgi intermediate compartment membrane. It localises to the golgi apparatus membrane. It is found in the endoplasmic reticulum membrane. Its function is as follows. Mannose-specific lectin. May recognize sugar residues of glycoproteins, glycolipids, or glycosylphosphatidyl inositol anchors and may be involved in the sorting or recycling of proteins, lipids, or both. The LMAN1-MCFD2 complex forms a specific cargo receptor for the ER-to-Golgi transport of selected proteins. This is Protein ERGIC-53 (LMAN1) from Homo sapiens (Human).